The chain runs to 162 residues: Small ribosomal subunit protein uS13 (162 aa).

Residues 142–162 (RGQRTKSTGRRGSTVGVSRKK) form a disordered region.

This sequence belongs to the universal ribosomal protein uS13 family. Part of the 30S ribosomal subunit. Forms a loose heterodimer with protein S19. Forms two bridges to the 50S subunit in the 70S ribosome.

Located at the top of the head of the 30S subunit, it contacts several helices of the 16S rRNA. In the 70S ribosome it contacts the 23S rRNA (bridge B1a) and protein L5 of the 50S subunit (bridge B1b), connecting the 2 subunits; these bridges are implicated in subunit movement. This Methanosarcina acetivorans (strain ATCC 35395 / DSM 2834 / JCM 12185 / C2A) protein is Small ribosomal subunit protein uS13.